The sequence spans 352 residues: Chorismate synthase (352 aa).

Position 48 (Arg48) interacts with NADP(+). FMN contacts are provided by residues 125–127 (RSS), 237–238 (NA), Gly278, 293–297 (KPTSS), and Arg319.

It belongs to the chorismate synthase family. As to quaternary structure, homotetramer. The cofactor is FMNH2.

The catalysed reaction is 5-O-(1-carboxyvinyl)-3-phosphoshikimate = chorismate + phosphate. Its pathway is metabolic intermediate biosynthesis; chorismate biosynthesis; chorismate from D-erythrose 4-phosphate and phosphoenolpyruvate: step 7/7. In terms of biological role, catalyzes the anti-1,4-elimination of the C-3 phosphate and the C-6 proR hydrogen from 5-enolpyruvylshikimate-3-phosphate (EPSP) to yield chorismate, which is the branch point compound that serves as the starting substrate for the three terminal pathways of aromatic amino acid biosynthesis. This reaction introduces a second double bond into the aromatic ring system. In Francisella tularensis subsp. tularensis (strain FSC 198), this protein is Chorismate synthase.